Reading from the N-terminus, the 375-residue chain is Queuine tRNA-ribosyltransferase (375 aa).

Catalysis depends on Asp89, which acts as the Proton acceptor. Residues 89–93 (DSGGF), Asp143, Gln187, and Gly214 each bind substrate. Residues 245–251 (GVGKPED) are RNA binding. Residue Asp264 is the Nucleophile of the active site. The RNA binding; important for wobble base 34 recognition stretch occupies residues 269–273 (TRNAR). Residues Cys302, Cys304, Cys307, and His333 each coordinate Zn(2+).

The protein belongs to the queuine tRNA-ribosyltransferase family. As to quaternary structure, homodimer. Within each dimer, one monomer is responsible for RNA recognition and catalysis, while the other monomer binds to the replacement base PreQ1. Requires Zn(2+) as cofactor.

It catalyses the reaction 7-aminomethyl-7-carbaguanine + guanosine(34) in tRNA = 7-aminomethyl-7-carbaguanosine(34) in tRNA + guanine. It functions in the pathway tRNA modification; tRNA-queuosine biosynthesis. Catalyzes the base-exchange of a guanine (G) residue with the queuine precursor 7-aminomethyl-7-deazaguanine (PreQ1) at position 34 (anticodon wobble position) in tRNAs with GU(N) anticodons (tRNA-Asp, -Asn, -His and -Tyr). Catalysis occurs through a double-displacement mechanism. The nucleophile active site attacks the C1' of nucleotide 34 to detach the guanine base from the RNA, forming a covalent enzyme-RNA intermediate. The proton acceptor active site deprotonates the incoming PreQ1, allowing a nucleophilic attack on the C1' of the ribose to form the product. After dissociation, two additional enzymatic reactions on the tRNA convert PreQ1 to queuine (Q), resulting in the hypermodified nucleoside queuosine (7-(((4,5-cis-dihydroxy-2-cyclopenten-1-yl)amino)methyl)-7-deazaguanosine). The chain is Queuine tRNA-ribosyltransferase from Aliivibrio salmonicida (strain LFI1238) (Vibrio salmonicida (strain LFI1238)).